Reading from the N-terminus, the 473-residue chain is PTS system trehalose-specific EIIBC component (473 aa).

Residues 1 to 89 (MMSKINQTDI…IASTGQAQVD (89 aa)) form the PTS EIIB type-1 domain. Over 1–110 (MMSKINQTDI…MKWHEQLISH (110 aa)) the chain is Cytoplasmic. Cys29 acts as the Phosphocysteine intermediate; for EIIB activity in catalysis. A Phosphocysteine; by EIIA modification is found at Cys29. One can recognise a PTS EIIC type-1 domain in the interval 109–473 (SHFAVIFFPL…KYRLGTLDIV (365 aa)). Residues 111–131 (FAVIFFPLLPALISGGLILGF) traverse the membrane as a helical segment. Over 132 to 158 (RNVIGDLPMSNGQTLAQMYPSLQTIYD) the chain is Periplasmic. A helical membrane pass occupies residues 159-179 (FLWLIGEAIFFYLPVGICWSA). The Cytoplasmic segment spans residues 180–187 (VKKMGGTP). A helical transmembrane segment spans residues 188-208 (ILGIVLGVTLVSPQLMNAYLL). The Periplasmic segment spans residues 209 to 225 (GQQLPEVWDFGMFSIAK). The chain crosses the membrane as a helical span at residues 226-246 (VGYQAQVIPALLAGLALGVIE). The Cytoplasmic portion of the chain corresponds to 247-258 (TRLKRIVPDYLY). The chain crosses the membrane as a helical span at residues 259-279 (LVVVPVCSLILAVFLAHALIG). Topologically, residues 280–300 (PFGRMIGDGVAFAVRHLMTGS) are periplasmic. A helical membrane pass occupies residues 301-321 (FAPIGAALFGFLYAPLVITGV). Topologically, residues 322–340 (HQTTLAIDLQMIQSMGGTP) are cytoplasmic. The chain crosses the membrane as a helical span at residues 341–361 (VWPLIALSNIAQGSAVIGIII). Topologically, residues 362–370 (SSRKHNERE) are periplasmic. The chain crosses the membrane as a helical span at residues 371–391 (ISVPAAISAWLGVTEPAMYGI). Topologically, residues 392-398 (NLKYRFP) are cytoplasmic. Residues 399–419 (MLCAMIGSGLAGLLCGLNGVM) traverse the membrane as a helical segment. At 420–440 (ANGIGVGGLPGILSIQPSYWQ) the chain is on the periplasmic side. Residues 441–461 (VFALAMAIAIIIPIVLTSFIY) form a helical membrane-spanning segment. Topologically, residues 462 to 473 (QRKYRLGTLDIV) are cytoplasmic.

It is found in the cell inner membrane. It catalyses the reaction alpha,alpha-trehalose(out) + N(pros)-phospho-L-histidyl-[protein] = alpha,alpha-trehalose 6-phosphate(in) + L-histidyl-[protein]. Its function is as follows. The phosphoenolpyruvate-dependent sugar phosphotransferase system (sugar PTS), a major carbohydrate active transport system, catalyzes the phosphorylation of incoming sugar substrates concomitantly with their translocation across the cell membrane. This system is involved in trehalose transport at low osmolarity. The protein is PTS system trehalose-specific EIIBC component (treB) of Escherichia coli (strain K12).